A 1179-amino-acid chain; its full sequence is ATP-dependent helicase/deoxyribonuclease subunit B (1179 aa).

This sequence belongs to the helicase family. AddB/RexB type 2 subfamily. Heterodimer of AddA and RexB. Requires Mg(2+) as cofactor.

Its function is as follows. The heterodimer acts as both an ATP-dependent DNA helicase and an ATP-dependent, dual-direction single-stranded exonuclease. Recognizes the chi site generating a DNA molecule suitable for the initiation of homologous recombination. This subunit has 5' -&gt; 3' nuclease activity but not helicase activity. The chain is ATP-dependent helicase/deoxyribonuclease subunit B from Lacticaseibacillus paracasei (strain ATCC 334 / BCRC 17002 / CCUG 31169 / CIP 107868 / KCTC 3260 / NRRL B-441) (Lactobacillus paracasei).